The following is a 1562-amino-acid chain: Neuralized-like protein 4 (1562 aa).

Gly residues predominate over residues 1-42 (MAAGSGGSGGSGGGPGPGPGGGGGPSGSGSGPGSNGGLGSGG). Disordered regions lie at residues 1 to 48 (MAAG…HPRT) and 207 to 236 (PEPG…LAEQ). NHR domains are found at residues 41 to 207 (GGEL…VLPP) and 317 to 484 (ALLF…IVHN). A compositionally biased stretch (pro residues) spans 207 to 224 (PEPGFSPPTPIPTPPLEP). A Phosphoserine modification is found at Ser502. NHR domains follow at residues 520–686 (RLLF…IVDD) and 716–884 (DLRF…ITNA). Residues 691–716 (PVPEPLPEGNNQVSPSSPSSGAGGSD) are disordered. At Ser907 the chain carries Phosphoserine. Positions 913–1086 (AHRFHSTCGK…PVRGVSIVSS (174 aa)) constitute an NHR 5 domain. The disordered stretch occupies residues 1086–1123 (STRLEESEGTQPPSPSSDTGSEGEEDDEGEEHGLGGQN). The segment covering 1106-1115 (SEGEEDDEGE) has biased composition (acidic residues). One can recognise an NHR 6 domain in the interval 1131–1294 (TLEFLENHGK…QCEQVTIVNP (164 aa)).

In terms of assembly, interacts with CCP110; this interaction propmotes CCP110 ubiquitination and degradation via the proteasome pathway. Via its interaction with CCP110, may indirectly interact with CEP97. Interacts with the E3 ubiquitin-protein ligase HERC2 and UBE3A. May interact with MAPK6 and hence mediate MAPK6 interaction with UBE3A. Interaction with UBE3A may be indirect and mediated by HERC2. Post-translationally, ubiquitinated; undergoes HERC2-dependent 'Lys-48' ubiquitination. This ubiquitination leads to proteasomal degradation. As to expression, widely expressed at high levels (including brain).

Its subcellular location is the cytoplasm. The protein resides in the cytoskeleton. The protein localises to the microtubule organizing center. It localises to the centrosome. It is found in the centriole. In terms of biological role, promotes CCP110 ubiquitination and proteasome-dependent degradation. By counteracting accumulation of CP110, maintains normal centriolar homeostasis and preventing formation of ectopic microtubular organizing centers. This is Neuralized-like protein 4 (NEURL4) from Homo sapiens (Human).